Here is a 775-residue protein sequence, read N- to C-terminus: DNA polymerase (775 aa).

The protein belongs to the DNA polymerase type-B family. Monomer.

The enzyme catalyses DNA(n) + a 2'-deoxyribonucleoside 5'-triphosphate = DNA(n+1) + diphosphate. An 11-mer corresponding to the PIP-box of RfcL inhibits DNA synthesis. Functionally, in addition to polymerase activity, this DNA polymerase exhibits 3' to 5' exonuclease activity. The protein is DNA polymerase (pol) of Pyrococcus furiosus (strain ATCC 43587 / DSM 3638 / JCM 8422 / Vc1).